Here is a 1000-residue protein sequence, read N- to C-terminus: ATP-dependent DNA/RNA helicase DHX36 (1000 aa).

Residues 1-43 (MSYDYHQSWSRDGGPRGSGQGSGGGGGGSRGSGGGGGGRGGRG) form a required for recruitment to cytoplasmic stress granules region. A disordered region spans residues 1-53 (MSYDYHQSWSRDGGPRGSGQGSGGGGGGSRGSGGGGGGRGGRGRHPAHLKGRE). The interval 1 to 96 (MSYDYHQSWS…IVQLLNSVQA (96 aa)) is required for the pre-miR-134 transport. Positions 1–192 (MSYDYHQSWS…KKTDPRYIEM (192 aa)) are necessary for nuclear and nucleolar caps localizations. Residues 15–40 (PRGSGQGSGGGGGGSRGSGGGGGGRG) show a composition bias toward gly residues. The tract at residues 45 to 67 (HPAHLKGREIGLWYAKKQTQKNK) is DSM (DHX36-specific motif). The segment at 45-97 (HPAHLKGREIGLWYAKKQTQKNKEAERQERAVVHMDERREEQIVQLLNSVQAK) is required for G4-DNA- and G4-RNA-binding. RecA-like domain regions lie at residues 98 to 378 (NDKD…MIHI) and 379 to 620 (PGFT…DYQL). The residue at position 153 (S153) is a Phosphoserine. The region spanning 209 to 379 (VNLINNHQVT…FGNCPMIHIP (171 aa)) is the Helicase ATP-binding domain. 225 to 230 (GCGKTT) serves as a coordination point for ATP. A necessary for interaction with single-stranded DNA at the 3'-end of the G4-DNA structure region spans residues 257–309 (RRISAISVAERVAAERAESCGNGNSTGYQIRLQSRLPRKQGSILYCTTGIILQ). The DEAH box motif lies at 326 to 329 (DEIH). The Mg(2+) site is built by E327 and H329. The Helicase C-terminal domain maps to 469–639 (ALIRYIVLEE…ELCLQIKILR (171 aa)). The interval 490–549 (WDNISTLHDLLMSQVMFKSDRFLIIPLHSLMPTVNQTQVFKKTPPGVRKIVIATNIAETS) is necessary for interaction with single-stranded DNA at the 3'-end of the G4-DNA structure. The Nuclear localization signal signature appears at 509-520 (DRFLIIPLHSLM). ATP contacts are provided by residues S549 and 594 to 597 (RAGR). Residues 621 to 690 (PEILRTPLEE…LGVHLARLPV (70 aa)) are WH domain. 3 necessary for interaction with single-stranded DNA at the 3'-end of the G4-DNA structure regions span residues 630–689 (ELCL…ARLP), 841–852 (NLGKKRKMVKVH), and 862–892 (HPKSVNVEQTDFHYNWLIYHLKMRTSSIYLY). The tract at residues 833–897 (PKVAKIRLNL…SIYLYDCTEV (65 aa)) is OB-fold-like subdomains. K939 is subject to N6-acetyllysine.

As to quaternary structure, found in a multi-helicase-TICAM1 complex at least composed of DHX36, DDX1, DDX21 and TICAM1; this complex exists in resting cells with or without dsRNA poly(I:C) ligand stimulation. Interacts (via C-terminus) with TICAM1 (via TIR domain). Interacts (via C-terminus) with DDX21; this interaction serves as bridges to TICAM1. Interacts with TERT; this interaction is dependent on the ability of DHX36 to bind to the G-quadruplex RNA (G4-RNA) structure present in the telomerase RNA template component (TERC). Interacts with DKC1; this interaction is dependent on the ability of DHX36 to bind to the G4-RNA structure present in TERC. Interacts with PARN; this interaction stimulates PARN to enhance uPA mRNA decay. Interacts with EXOSC3; this interaction occurs in a RNase-insensitive manner. Interacts with EXOSC10; this interaction occurs in a RNase-insensitive manner. Interacts with ILF3; this interaction occurs in a RNA-dependent manner. Interacts with ELAVL1; this interaction occurs in an RNA-dependent manner. Interacts with DDX5; this interaction occurs in a RNA-dependent manner. Interacts with DDX17; this interaction occurs in a RNA-dependent manner. Interacts with HDAC1; this interaction occurs in a RNA-dependent manner. Interacts with HDAC3; this interaction occurs in a RNA-dependent manner. Interacts with HDAC4. Interacts with AGO1. Interacts with AGO2. Interacts with ERCC6. It depends on Mg(2+) as a cofactor.

The protein localises to the nucleus. It localises to the cytoplasm. It is found in the cytosol. Its subcellular location is the stress granule. The protein resides in the nucleus speckle. The protein localises to the chromosome. It localises to the telomere. It is found in the mitochondrion. Its subcellular location is the perikaryon. The protein resides in the cell projection. The protein localises to the dendrite. It localises to the axon. The enzyme catalyses ATP + H2O = ADP + phosphate + H(+). Its activity is regulated as follows. ATPase activity is enhanced in the presence of homomeric poly(U) RNAs, but not by double-stranded DNA (dsDNA), double-stranded RNA (dsRNA) and tRNA. Functionally, multifunctional ATP-dependent helicase that unwinds G-quadruplex (G4) structures. Plays a role in many biological processes such as genomic integrity, gene expression regulations and as a sensor to initiate antiviral responses. G4 structures correspond to helical structures containing guanine tetrads. Binds with high affinity to and unwinds G4 structures that are formed in nucleic acids (G4-DNA and G4-RNA). Plays a role in genomic integrity. Converts the G4-RNA structure present in telomerase RNA template component (TREC) into a double-stranded RNA to promote P1 helix formation that acts as a template boundary ensuring accurate reverse transcription. Plays a role in transcriptional regulation. Resolves G4-DNA structures in promoters of genes, such as YY1, KIT/c-kit and ALPL and positively regulates their expression. Plays a role in post-transcriptional regulation. Unwinds a G4-RNA structure located in the 3'-UTR polyadenylation site of the pre-mRNA TP53 and stimulates TP53 pre-mRNA 3'-end processing in response to ultraviolet (UV)-induced DNA damage. Binds to the precursor-microRNA-134 (pre-miR-134) terminal loop and regulates its transport into the synapto-dendritic compartment. Involved in the pre-miR-134-dependent inhibition of target gene expression and the control of dendritic spine size. Plays a role in the regulation of cytoplasmic mRNA translation and mRNA stability. Binds to both G4-RNA structures and alternative non-quadruplex-forming sequence within the 3'-UTR of the PITX1 mRNA regulating negatively PITX1 protein expression. Binds to both G4-RNA structure in the 5'-UTR and AU-rich elements (AREs) localized in the 3'-UTR of NKX2-5 mRNA to either stimulate protein translation or induce mRNA decay in an ELAVL1-dependent manner, respectively. Also binds to ARE sequences present in several mRNAs mediating exosome-mediated 3'-5' mRNA degradation. Involved in cytoplasmic urokinase-type plasminogen activator (uPA) mRNA decay. Component of a multi-helicase-TICAM1 complex that acts as a cytoplasmic sensor of viral double-stranded RNA (dsRNA) and plays a role in the activation of a cascade of antiviral responses including the induction of pro-inflammatory cytokines via the adapter molecule TICAM1. Required for the early embryonic development and hematopoiesis. Involved in the regulation of cardioblast differentiation and proliferation during heart development. Involved in spermatogonia differentiation. May play a role in ossification. The polypeptide is ATP-dependent DNA/RNA helicase DHX36 (Rattus norvegicus (Rat)).